A 917-amino-acid chain; its full sequence is Hexokinase-2 (917 aa).

The residue at position 1 (Met-1) is an N-acetylmethionine. Residues 1 to 16 form a mitochondrial-binding peptide (MBP) region; that stretch reads MIASHLLAYFFTELNH. Hexokinase domains lie at 16–458 and 464–906; these read HDQV…MVTA and ADQH…LITA. Residues Arg-30 and 84–89 each bind ATP; that span reads DLGGTN. The interval 73-207 is hexokinase small subdomain 1; the sequence is DGTEHGEFLA…DFDIDIVAVV (135 aa). D-glucose 6-phosphate is bound at residue 84–88; sequence DLGGT. D-glucose is bound by residues 155–156, 172–173, and 208–209; these read SF, TK, and ND. Residues 208 to 447 form a hexokinase large subdomain 1 region; the sequence is NDTVGTMMTC…CDVRFLRSED (240 aa). Positions 209 and 232 each coordinate D-glucose 6-phosphate. D-glucose-binding positions include Asn-235, Glu-260, and 291–294; that span reads QLFE. 413–415 is a D-glucose 6-phosphate binding site; sequence DGS. 425–426 contacts ATP; that stretch reads KR. Residues Ser-449 and 532 to 536 contribute to the D-glucose 6-phosphate site; that span reads DLGGT. The tract at residues 521-655 is hexokinase small subdomain 2; the sequence is DGTEKGDFLA…EFDLDVVAVV (135 aa). 532–537 serves as a coordination point for ATP; that stretch reads DLGGTN. D-glucose contacts are provided by residues 603–604, 620–621, and 656–657; these read SF, TK, and ND. The interval 656-895 is hexokinase large subdomain 2; that stretch reads NDTVGTMMTC…CDVSFLQSED (240 aa). Residues Asp-657 and Thr-680 each coordinate D-glucose 6-phosphate. Residue Thr-680 participates in ATP binding. Residues 682 to 683, Glu-708, and 739 to 742 contribute to the D-glucose site; these read SN and QRFE. ATP-binding positions include 747–748, 784–788, and 863–867; these read GM, TKFLS, and TLYKL. D-glucose 6-phosphate contacts are provided by residues 861-863 and Ser-897; that span reads DGT.

It belongs to the hexokinase family. As to quaternary structure, monomer. Interacts with TIGAR; the interaction increases hexokinase activity in a hypoxia- and HIF1A-dependent manner. In terms of tissue distribution, predominant hexokinase isozyme expressed in insulin-responsive tissues such as skeletal muscle.

The protein resides in the mitochondrion outer membrane. It is found in the cytoplasm. Its subcellular location is the cytosol. It carries out the reaction a D-hexose + ATP = a D-hexose 6-phosphate + ADP + H(+). The catalysed reaction is D-fructose + ATP = D-fructose 6-phosphate + ADP + H(+). It catalyses the reaction D-glucose + ATP = D-glucose 6-phosphate + ADP + H(+). It participates in carbohydrate metabolism; hexose metabolism. The protein operates within carbohydrate degradation; glycolysis; D-glyceraldehyde 3-phosphate and glycerone phosphate from D-glucose: step 1/4. Its activity is regulated as follows. Hexokinase activity is specifically inhibited by 2,6-disubstituted glucosamines. Functionally, catalyzes the phosphorylation of hexose, such as D-glucose and D-fructose, to hexose 6-phosphate (D-glucose 6-phosphate and D-fructose 6-phosphate, respectively). Mediates the initial step of glycolysis by catalyzing phosphorylation of D-glucose to D-glucose 6-phosphate. Plays a key role in maintaining the integrity of the outer mitochondrial membrane by preventing the release of apoptogenic molecules from the intermembrane space and subsequent apoptosis. In Homo sapiens (Human), this protein is Hexokinase-2.